The following is a 468-amino-acid chain: Glutamate--tRNA ligase (468 aa).

The short motif at proline 14–asparagine 24 is the 'HIGH' region element. Positions lysine 246–arginine 250 match the 'KMSKS' region motif. Lysine 249 contacts ATP.

This sequence belongs to the class-I aminoacyl-tRNA synthetase family. Glutamate--tRNA ligase type 1 subfamily. In terms of assembly, monomer.

Its subcellular location is the cytoplasm. The enzyme catalyses tRNA(Glu) + L-glutamate + ATP = L-glutamyl-tRNA(Glu) + AMP + diphosphate. Functionally, catalyzes the attachment of glutamate to tRNA(Glu) in a two-step reaction: glutamate is first activated by ATP to form Glu-AMP and then transferred to the acceptor end of tRNA(Glu). The protein is Glutamate--tRNA ligase of Leptothrix cholodnii (strain ATCC 51168 / LMG 8142 / SP-6) (Leptothrix discophora (strain SP-6)).